A 231-amino-acid polypeptide reads, in one-letter code: Ribosyldihydronicotinamide dehydrogenase [quinone] (231 aa).

Residues histidine 12, 18–21 (FNGS), and 104–107 (LYWF) contribute to the FAD site. 127–129 (FDV) serves as a coordination point for substrate. FAD is bound by residues 148 to 151 (TTGG) and tyrosine 156. Histidine 174 and histidine 178 together coordinate Zn(2+). Glutamate 194 contacts FAD. Serine 197 carries the phosphoserine modification. Arginine 201 contributes to the FAD binding site. Residue cysteine 223 coordinates Zn(2+).

This sequence belongs to the NAD(P)H dehydrogenase (quinone) family. As to quaternary structure, homodimer. The cofactor is Zn(2+). FAD serves as cofactor.

It is found in the cytoplasm. The catalysed reaction is 1-(beta-D-ribofuranosyl)-1,4-dihydronicotinamide + a quinone + H(+) = beta-nicotinamide D-riboside + a quinol. In terms of biological role, the enzyme apparently serves as a quinone reductase in connection with conjugation reactions of hydroquinones involved in detoxification pathways as well as in biosynthetic processes such as the vitamin K-dependent gamma-carboxylation of glutamate residues in prothrombin synthesis. In Rattus norvegicus (Rat), this protein is Ribosyldihydronicotinamide dehydrogenase [quinone] (Nqo2).